We begin with the raw amino-acid sequence, 25 residues long: M-poneritoxin-Nc2a (25 aa).

The protein belongs to the ponericin-L family. As to expression, expressed by the venom gland.

The protein resides in the secreted. Its subcellular location is the target cell membrane. Functionally, membrane-perturbating peptide with multiple activities. It is insecticidal, since it induces reversible paralysis in insects (L.cuprina) after 1 hour, but fails to kill them. It shows moderate antibacterial activity against some Gram-positive and Gram-negative bacteria. It is also antiparasitic, since it moderately inhibits the larval development of the major pathogenic nematode of ruminants (H.contortus, IC(50)=23.2 uM), but fails to reduce the motility of adult males of the other nematode B.malayi. It also shows moderate cytotoxic activity against HEK293 cells (EC(50)=48-57 uM) but does not induce hemolysis in human erythrocytes. It also causes a moderate increase in intracellular calcium concentration on neuronal and epithelial cell lines, which supports a non-specific membrane perturbation mechanism of action. In Neoponera commutata (Large hunting ant), this protein is M-poneritoxin-Nc2a.